The following is a 596-amino-acid chain: Lamin-B2 (596 aa).

The tract at residues 1–20 (MASLPPHAGPATPLSPTRLS) is disordered. The head stretch occupies residues 1–26 (MASLPPHAGPATPLSPTRLSRLQEKE). A Phosphothreonine modification is found at T12. S15 is modified (phosphoserine). The 357-residue stretch at 24-380 (EKEELRELND…KLLEGEEERL (357 aa)) folds into the IF rod domain. A coil 1A region spans residues 27–61 (ELRELNDRLAHYIDRVRALELENDRLLLRISEKEE). N6-acetyllysine; alternate is present on K59. K59 is covalently cross-linked (Glycyl lysine isopeptide (Lys-Gly) (interchain with G-Cter in SUMO2); alternate). The tract at residues 62–73 (VTTREVSGIKTL) is linker 1. Residues 74-207 (YESELADARR…AFSKSVFEEE (134 aa)) form a coil 1B region. Residues K173 and K233 each participate in a glycyl lysine isopeptide (Lys-Gly) (interchain with G-Cter in SUMO2) cross-link. Residues 208–234 (VRETRRRHERRLVEVDSSRQQEYDFKM) form a linker 2 region. The coil 2 stretch occupies residues 235 to 378 (AQALEDLRSQ…YRKLLEGEEE (144 aa)). 2 positions are modified to phosphoserine: S294 and S385. Residues 376–440 (EEERLKLSPS…ASRVSSGSRL (65 aa)) form a disordered region. A tail region spans residues 379–596 (RLKLSPSPSS…RTTSRGCRLM (218 aa)). Over residues 382 to 403 (LSPSPSSRITISRATSSSSSSS) the composition is skewed to low complexity. O-linked (GlcNAc) threonine glycosylation is present at T391. S398, S400, and S402 each carry phosphoserine. Omega-N-methylarginine is present on R413. A Nuclear localization signal motif is present at residues 415–420 (KRRRLE). A compositionally biased stretch (low complexity) spans 425–439 (SGSPSRASRVSSGSR). In terms of domain architecture, LTD spans 438–559 (SRLAQQTVAT…VKAAKHSSVQ (122 aa)). Residue K465 forms a Glycyl lysine isopeptide (Lys-Gly) (interchain with G-Cter in SUMO2) linkage. Phosphoserine is present on S473. The tract at residues 552-596 (AAKHSSVQGRENGEEEEEEEAEFGEEDLFHQQGDPRTTSRGCRLM) is disordered. Residues 564–577 (GEEEEEEEAEFGEE) are compositionally biased toward acidic residues. The segment covering 585-596 (DPRTTSRGCRLM) has biased composition (polar residues). C593 carries the post-translational modification Cysteine methyl ester. Residue C593 is the site of S-farnesyl cysteine attachment. A propeptide spans 594–596 (RLM) (removed in mature form).

This sequence belongs to the intermediate filament family. As to quaternary structure, dimer. Lamin dimers then assemble into dimeric head-to-tail polymers. Ultimately, two head-to-tail polymers assemble laterally into a protofilament with a uniformly shaped rod of 3.5 nm in diameter. Interacts with TMEM43. Post-translationally, B-type lamins undergo a series of modifications, such as farnesylation and phosphorylation. Increased phosphorylation of the lamins occurs before envelope disintegration and probably plays a role in regulating lamin associations. In terms of processing, phosphorylation plays a key role in lamin organization, subcellular localization and nuclear envelope disintegration. Phosphorylation by CDK1 at Ser-15 and Ser-385 at the onset of mitosis drives lamin disassembly and nuclear envelope breakdown. In terms of tissue distribution, germ cell-specific.

The protein localises to the nucleus lamina. Its function is as follows. Lamins are intermediate filament proteins that assemble into a filamentous meshwork, and which constitute the major components of the nuclear lamina, a fibrous layer on the nucleoplasmic side of the inner nuclear membrane. Lamins provide a framework for the nuclear envelope, bridging the nuclear envelope and chromatin, thereby playing an important role in nuclear assembly, chromatin organization, nuclear membrane and telomere dynamics. The structural integrity of the lamina is strictly controlled by the cell cycle, as seen by the disintegration and formation of the nuclear envelope in prophase and telophase, respectively. In Mus musculus (Mouse), this protein is Lamin-B2 (Lmnb2).